The sequence spans 463 residues: Putative dipeptidase YtjP (463 aa).

His85 is a binding site for Zn(2+). The active site involves Asp87. Residue Asp116 participates in Zn(2+) binding. Glu150 serves as the catalytic Proton acceptor. The Zn(2+) site is built by Glu151, Asp174, and His436.

This sequence belongs to the peptidase M20A family. Zn(2+) serves as cofactor.

This Bacillus subtilis (strain 168) protein is Putative dipeptidase YtjP (ytjP).